The following is a 752-amino-acid chain: GTPase-activating protein rrc-1 (752 aa).

Positions 165-244 (PAIAAAVVTK…PRDCVMLIDD (80 aa)) constitute an SH3 domain. In terms of domain architecture, Rho-GAP spans 281-463 (LELTELFMRT…FCIENSDSLF (183 aa)). 2 disordered regions span residues 523 to 552 (STGE…ATFQ) and 582 to 609 (RSMR…GANN).

Its function is as follows. Functions as a GTPase-activating protein (GAP) for ced-10/RAC-1 and CDC42. The sequence is that of GTPase-activating protein rrc-1 from Caenorhabditis briggsae.